A 758-amino-acid polypeptide reads, in one-letter code: Vitamin K-dependent gamma-carboxylase (758 aa).

The disordered stretch occupies residues 1–22 (MAVSAGSARTSPSSDKVQKDKA). Position 2 is an N-acetylalanine (A2). The Cytoplasmic segment spans residues 2 to 60 (AVSAGSARTSPSSDKVQKDKAELISGPRQDSRIGKLLGFEWTDLSSWRRLVTLLNRPTD). A helical membrane pass occupies residues 61 to 81 (PASLAVFRFLFGFLMVLDIPQ). The Lumenal segment spans residues 82 to 113 (ERGLSSLDRKYLDGLDVCRFPLLDALRPLPLD). C99 and C450 form a disulfide bridge. Residues 114 to 134 (WMYLVYTIMFLGALGMMLGLC) traverse the membrane as a helical segment. Over 135-136 (YR) the chain is Cytoplasmic. The chain crosses the membrane as a helical span at residues 137-157 (ISCVLFLLPYWYVFLLDKTSW). The Lumenal portion of the chain corresponds to 158-292 (NNHSYLYGLL…VSYFHCMNSQ (135 aa)). The active-site Proton acceptor is K218. A helical transmembrane segment spans residues 293–313 (LFSIGMFSYVMLASSPLFCSP). Topologically, residues 314-361 (EWPRKLVSYCPRRLQQLLPLKAAPQPSVSCVYKRSRGKSGQKPGLRHQ) are cytoplasmic. A helical membrane pass occupies residues 362-382 (LGAAFTLLYLLEQLFLPYSHF). Over 383-758 (LTQGYNNWTN…SNPDPVHSEF (376 aa)) the chain is Lumenal. Residues N459 and N550 are each glycosylated (N-linked (GlcNAc...) asparagine). The disordered stretch occupies residues 732-758 (GELNPSNTDSSHSNPPESNPDPVHSEF). Polar residues predominate over residues 735-747 (NPSNTDSSHSNPP).

This sequence belongs to the vitamin K-dependent gamma-carboxylase family. Monomer. May interact with CALU.

The protein resides in the endoplasmic reticulum membrane. It catalyses the reaction 4-carboxy-L-glutamyl-[protein] + 2,3-epoxyphylloquinone + H2O + H(+) = phylloquinol + L-glutamyl-[protein] + CO2 + O2. In terms of biological role, mediates the vitamin K-dependent carboxylation of glutamate residues to calcium-binding gamma-carboxyglutamate (Gla) residues with the concomitant conversion of the reduced hydroquinone form of vitamin K to vitamin K epoxide. Catalyzes gamma-carboxylation of various proteins, such as blood coagulation factors (F2, F7, F9 and F10), osteocalcin (BGLAP) or matrix Gla protein (MGP). This is Vitamin K-dependent gamma-carboxylase (GGCX) from Homo sapiens (Human).